The primary structure comprises 400 residues: LIM homeobox transcription factor 1-beta.1 (400 aa).

LIM zinc-binding domains are found at residues 54–113 (AVCE…LFAA) and 114–175 (KCSG…EKDL). The interval 175 to 228 (LLSSGSPDDSDSVKSDDEEGDVKPGKGRVNQGKGSDDGKDPRRPKRPRTILTTQ) is disordered. The homeobox DNA-binding region spans 218–277 (PKRPRTILTTQQRRAFKASFEVSSKPCRKVRETLAAETGLSVRVVQVWFQNQRAKIKKLA).

Shows a temporal expression pattern in three main areas: neural, kidney and limbs. From stage 13 onwards, expressed in regions of the nervous system including the placodes and otic vesicles, eye, specific sets of neurons, and in discreet regions of the neural tube. From stage 13, also expressed in the presumptive pronephros, and from stage 27 expression is predominant in the capsule of the pronephric glomus. Also expressed in the developing forelimbs and hindlimbs. In metamorphosing tadpoles, expressed in the eye, brain, muscle and mesonephric kidney.

The protein resides in the nucleus. Its function is as follows. Required for early specification of the kidney glomus, lying upstream of wt1 in the pathway controlling glomus differentiation. The balance in levels and expression patterns of binding partners such as lhx1/lim-1 influences differentiation into glomus or tubule derivatives. Involved in specification of serotonergic neurons. In Xenopus laevis (African clawed frog), this protein is LIM homeobox transcription factor 1-beta.1.